The primary structure comprises 338 residues: 3-isopropylmalate dehydrogenase (338 aa).

Substrate contacts are provided by R88, R98, R122, and D212. D212, D236, and D240 together coordinate Mg(2+). Residue 272 to 284 (GSAPDIAGQGIAD) coordinates NAD(+).

Belongs to the isocitrate and isopropylmalate dehydrogenases family. LeuB type 2 subfamily. Homodimer. Mg(2+) is required as a cofactor. Mn(2+) serves as cofactor.

It is found in the cytoplasm. The enzyme catalyses (2R,3S)-3-isopropylmalate + NAD(+) = 4-methyl-2-oxopentanoate + CO2 + NADH. It participates in amino-acid biosynthesis; L-leucine biosynthesis; L-leucine from 3-methyl-2-oxobutanoate: step 3/4. Functionally, catalyzes the oxidation of 3-carboxy-2-hydroxy-4-methylpentanoate (3-isopropylmalate) to 3-carboxy-4-methyl-2-oxopentanoate. The product decarboxylates to 4-methyl-2 oxopentanoate. This Corynebacterium jeikeium (strain K411) protein is 3-isopropylmalate dehydrogenase.